The following is a 370-amino-acid chain: MKKKKDEELTPWAKYQKEHNANSRSRFKRKRKATSKNPREPQASFRRNNRNKVKKSNKKGTKRIVKEQRLSRQKLGILIGSTLIVIALFFGYFYSSISRVQKFSVSGNKRVSTAKILKNVSIKKNDVILTSIFKEGKFENNLLKKNTDIKDATVSISWSGKVKIKVKENAVMGYVIRNKTYYTVKQDGSVVRKSVSQPSSDYPIFRNFQENSTLKKFLKEYAQMPNSVQNDVAEVDFSPTKNVKDRLHFFMNDGNQVYAIMSTFAKKMKYYPEISASMKERGMVDLQVGAFSRPSGWTDEAKAASESSKSAESSSKAKKQEKTTQNSESADSTSASADSTETINSASSQSKEDLESSNAESTVNTQQDID.

The interval 1 to 65 (MKKKKDEELT…SNKKGTKRIV (65 aa)) is disordered. Residues 1–74 (MKKKKDEELT…VKEQRLSRQK (74 aa)) are Cytoplasmic-facing. Composition is skewed to basic residues over residues 25–34 (SRFKRKRKAT) and 47–63 (RNNR…GTKR). Residues 75-95 (LGILIGSTLIVIALFFGYFYS) form a helical membrane-spanning segment. Residues 96–370 (SISRVQKFSV…STVNTQQDID (275 aa)) lie on the Extracellular side of the membrane. Residues 98–169 (SRVQKFSVSG…GKVKIKVKEN (72 aa)) enclose the POTRA domain. Positions 295 to 370 (SGWTDEAKAA…STVNTQQDID (76 aa)) are disordered. Low complexity-rich tracts occupy residues 304–314 (ASESSKSAESS) and 327–342 (SESA…STET). Residues 356–370 (SSNAESTVNTQQDID) show a composition bias toward polar residues.

Belongs to the FtsQ/DivIB family. DivIB subfamily.

It localises to the cell membrane. Its function is as follows. Cell division protein that may be involved in stabilizing or promoting the assembly of the division complex. This is Cell division protein DivIB from Pediococcus pentosaceus (strain ATCC 25745 / CCUG 21536 / LMG 10740 / 183-1w).